We begin with the raw amino-acid sequence, 41 residues long: Large ribosomal subunit protein bL36 (41 aa).

This sequence belongs to the bacterial ribosomal protein bL36 family.

This is Large ribosomal subunit protein bL36 from Phenylobacterium zucineum (strain HLK1).